The sequence spans 365 residues: Ribosomal RNA large subunit methyltransferase F (365 aa).

Positions 1 to 50 are disordered; sequence MSKPAVKSVPSATAKTATRAANPRQKAKAPKQAKPEGKGRAKPSKDKPRA. Positions 33 to 50 are enriched in basic and acidic residues; it reads AKPEGKGRAKPSKDKPRA.

This sequence belongs to the methyltransferase superfamily. METTL16/RlmF family.

It is found in the cytoplasm. The enzyme catalyses adenosine(1618) in 23S rRNA + S-adenosyl-L-methionine = N(6)-methyladenosine(1618) in 23S rRNA + S-adenosyl-L-homocysteine + H(+). In terms of biological role, specifically methylates the adenine in position 1618 of 23S rRNA. The polypeptide is Ribosomal RNA large subunit methyltransferase F (Shewanella baltica (strain OS195)).